A 754-amino-acid chain; its full sequence is Disintegrin and metalloproteinase domain-containing protein 32 (754 aa).

An N-terminal signal peptide occupies residues 1 to 22; the sequence is MLGAMLHTLLLLLLAELGALLA. Phosphoserine is present on serine 23. Positions 23-176 are excised as a propeptide; that stretch reads SGPESQSSFL…TNYGILINKK (154 aa). A glycan (N-linked (GlcNAc...) asparagine) is linked at asparagine 126. Over 177–689 the chain is Extracellular; that stretch reads PKSPFKNLFP…ERASKNQEKK (513 aa). A Peptidase M12B domain is found at 187 to 384; it reads LYLEMSIVVD…EGAKCLQNKP (198 aa). 4 disulfide bridges follow: cysteine 296–cysteine 379, cysteine 338–cysteine 363, cysteine 340–cysteine 345, and cysteine 454–cysteine 475. N-linked (GlcNAc...) asparagine glycosylation is found at asparagine 362, asparagine 469, asparagine 570, and asparagine 571. One can recognise a Disintegrin domain in the interval 391 to 483; that stretch reads AAVCGNGKVE…NCPPDVTINN (93 aa). The 33-residue stretch at 628–660 folds into the EGF-like domain; that stretch reads QSKTCSSKCHGNGVCNSHGVCHCNAGYSPPNCQ. 3 cysteine pairs are disulfide-bonded: cysteine 632–cysteine 642, cysteine 636–cysteine 648, and cysteine 650–cysteine 659. Residues 690–710 form a helical membrane-spanning segment; sequence WLLSLYIVLIILASVFLIGTG. Over 711–754 the chain is Cytoplasmic; the sequence is WKGLKQCGSKEEESMSSESKSEDSTYTYVSRSTSETSSMTSTSS. A compositionally biased stretch (basic and acidic residues) spans 720–733; sequence KEEESMSSESKSED. A disordered region spans residues 720–754; it reads KEEESMSSESKSEDSTYTYVSRSTSETSSMTSTSS. The span at 734 to 754 shows a compositional bias: low complexity; that stretch reads STYTYVSRSTSETSSMTSTSS.

As to expression, expressed in sperm (at protein level). Highly expressed in the testis and weakly expressed in the epididymis, brain and heart.

It is found in the membrane. May play a role in sperm development and fertilization This is a non-catalytic metalloprotease-like protein. The protein is Disintegrin and metalloproteinase domain-containing protein 32 of Mus musculus (Mouse).